The sequence spans 214 residues: MQLFHLCLIISCTCPTVQASKLCLGWLWGMDIDPYKEFGATVELLSFLPSDFFPSVRDLLDTASALYREALESPEHCSPHHTALRETILCWGELMTLATWVGNNLEDPASRDLVVNYVNTNMGLKIRQLLWFHISCLTFGRETVLEYLVSFGVWIRTPPAYRPPNAPILSTLPETTVVRRRDRGRSPRRRTPSPRRRRSQSPRRRRSQSRESQC.

The N-terminal stretch at 1 to 19 (MQLFHLCLIISCTCPTVQA) is a signal peptide. The tract at residues 25 to 27 (GWL) is HBEAG. The disordered stretch occupies residues 165 to 214 (NAPILSTLPETTVVRRRDRGRSPRRRTPSPRRRRSQSPRRRRSQSRESQC). Over residues 178 to 207 (VRRRDRGRSPRRRTPSPRRRRSQSPRRRRS) the composition is skewed to basic residues. A 1; half-length repeat occupies 186-192 (SPRRRTP). The segment at 186-208 (SPRRRTPSPRRRRSQSPRRRRSQ) is 3 X 8 AA repeats of S-P-R-R-R-R-S-Q. Positions 186 to 214 (SPRRRTPSPRRRRSQSPRRRRSQSRESQC) are excised as a propeptide. A run of 2 repeats spans residues 193-200 (SPRRRRSQ) and 201-208 (SPRRRRSQ).

Belongs to the orthohepadnavirus precore antigen family. Homodimerizes. Phosphorylated. Post-translationally, cleaved by host furin.

The protein resides in the secreted. Its subcellular location is the host nucleus. May regulate immune response to the intracellular capsid in acting as a T-cell tolerogen, by having an immunoregulatory effect which prevents destruction of infected cells by cytotoxic T-cells. This immune regulation may predispose to chronicity during perinatal infections and prevent severe liver injury during adult infections. This chain is External core antigen, found in Homo sapiens (Human).